Consider the following 1138-residue polypeptide: Ras guanine nucleotide exchange factor N (1138 aa).

LRR repeat units lie at residues 1–16, 18–39, and 43–64; these read MSYNSLTTIDIDITQL, HLKSVNLRSNKLGNSSGVSYFG, and TLQKLNLKENYLTELPSTFYLL. Disordered stretches follow at residues 126–180, 239–301, 319–360, 389–411, 473–540, 601–643, and 660–680; these read ALKN…SNNN, FNSE…GSRK, NKTH…SDTN, IDSPRTLERRNSSRDDIPISPPQ, GSPT…NNNN, ATTV…TSGS, and MSDVFSGGNSQGGGSSLSQSG. Positions 140 to 158 are enriched in low complexity; that stretch reads KTKGLHSSSSNINTSNNIT. Residues 263-275 are compositionally biased toward polar residues; sequence RAQTISGKQPSII. Gly residues predominate over residues 283–299; sequence SGGGSGNNNNSGGGGGS. Low complexity predominate over residues 326–352; the sequence is GHSSSSQSNSTTNTPSISSTPYPTSTI. Residues 393-405 are compositionally biased toward basic and acidic residues; the sequence is RTLERRNSSRDDI. Over residues 487 to 496 the composition is skewed to pro residues; the sequence is PQHPPPPPPI. Over residues 498–511 the composition is skewed to polar residues; the sequence is DNNQPKLNQSQNLI. 2 stretches are compositionally biased toward low complexity: residues 512 to 540 and 605 to 634; these read NTNSNSVTTTNNSSQTTTTTTTTTTNNNN and NSNSSNNLMMSNSPLSSSSMNLLQQSNSPQ. Positions 733-855 constitute an N-terminal Ras-GEF domain; that stretch reads GVPKVKNITL…LLLNIINMKR (123 aa). One can recognise a Ras-GEF domain in the interval 891-1118; sequence RPHEIARQLT…YSEASKIEEK (228 aa).

Promotes the exchange of Ras-bound GDP by GTP. May play a role in chemotaxis. This Dictyostelium discoideum (Social amoeba) protein is Ras guanine nucleotide exchange factor N (gefN).